Reading from the N-terminus, the 507-residue chain is Probable cyclic di-GMP phosphodiesterase PdeG (507 aa).

Helical transmembrane passes span 4–24 (TLIPILVAICLFITGVAILNI) and 217–237 (LIDKGFGILIFILLIACAAAF). The 255-residue stretch at 246 to 500 (SATPEEILRR…DLVKIILSKP (255 aa)) folds into the EAL domain.

Its subcellular location is the cell membrane. The enzyme catalyses 3',3'-c-di-GMP + H2O = 5'-phosphoguanylyl(3'-&gt;5')guanosine + H(+). In terms of biological role, phosphodiesterase (PDE) that catalyzes the hydrolysis of cyclic-di-GMP (c-di-GMP) to 5'-pGpG. The protein is Probable cyclic di-GMP phosphodiesterase PdeG of Escherichia coli (strain K12).